A 1209-amino-acid polypeptide reads, in one-letter code: Phospholipid-transporting ATPase ID (1209 aa).

The Cytoplasmic portion of the chain corresponds to 1-68 (MTVPKEIPEK…NIVTFLPVNL (68 aa)). Positions 12-36 (ARAGAPPSWSQKKPSWGTEEERRAR) are disordered. The chain crosses the membrane as a helical span at residues 69-89 (FEQFQEVANTYFLFLLILQLI). Residues 90–91 (PQ) are Exoplasmic loop-facing. Residues 92–112 (ISSLSWFTTIVPLVLVLTITA) traverse the membrane as a helical segment. Topologically, residues 113–295 (VKDATDDYFR…TSIDRLMNTL (183 aa)) are cytoplasmic. Residues 296–316 (VLWIFGFLVCMGVILAIGNAI) traverse the membrane as a helical segment. Topologically, residues 317–338 (WEHEVGTRFQVYLPWDEAVDSA) are exoplasmic loop. The chain crosses the membrane as a helical span at residues 339 to 359 (FFSGFLSFWSYIIILNTVVPI). Over 360 to 898 (SLYVSVEVIR…KFLCYFFYKN (539 aa)) the chain is Cytoplasmic. Residue aspartate 411 is the 4-aspartylphosphate intermediate of the active site. Positions 411, 412, 413, 515, 556, 579, 613, 693, 694, 695, 807, and 813 each coordinate ATP. Aspartate 411 provides a ligand contact to Mg(2+). Threonine 413 contributes to the Mg(2+) binding site. Aspartate 833 provides a ligand contact to Mg(2+). ATP-binding residues include asparagine 836 and aspartate 837. A Mg(2+)-binding site is contributed by aspartate 837. A helical membrane pass occupies residues 899–919 (FAFTMVHFWFGFFCGFSAQTV). The Exoplasmic loop portion of the chain corresponds to 920-922 (YDQ). Residues 923-943 (YFITLYNIVYTSLPVLAMGVF) traverse the membrane as a helical segment. The Cytoplasmic segment spans residues 944–972 (DQDVPEQRSMEYPKLYEPGQLNLLFNKRE). The chain crosses the membrane as a helical span at residues 973 to 993 (FFICIAQGIYTSVLMFFIPYG). Residues 994–1011 (VFAEATRDDGTQLADYQS) are Exoplasmic loop-facing. Residues 1012–1032 (FAVTVATSLVIVVSVQIGLDT) form a helical membrane-spanning segment. The Cytoplasmic segment spans residues 1033-1036 (GYWT). Residues 1037–1057 (AINHFFIWGSLAVYFAILFAM) traverse the membrane as a helical segment. Residues 1058–1082 (HSNGLFDMFPNQFRFVGNAQNTLAQ) are Exoplasmic loop-facing. Residues 1083–1103 (PTVWLTIALTTAVCIMPVVAF) form a helical membrane-spanning segment. Residues 1104-1209 (RFLRLSLKPD…SGGAEKPLKG (106 aa)) lie on the Cytoplasmic side of the membrane. Residue serine 1175 is modified to Phosphoserine. Residues 1179 to 1209 (RSSSSWIESLRRKKSDSANSPSGGAEKPLKG) are disordered.

Belongs to the cation transport ATPase (P-type) (TC 3.A.3) family. Type IV subfamily. As to quaternary structure, component of a P4-ATPase flippase complex which consists of a catalytic alpha subunit ATP8B2 and an accessory beta subunit TMEM30A or TMEM30B. The cofactor is Mg(2+). In terms of tissue distribution, expressed in brain and testes (at protein level).

The protein localises to the cell membrane. Its subcellular location is the endoplasmic reticulum membrane. It carries out the reaction ATP + H2O + phospholipidSide 1 = ADP + phosphate + phospholipidSide 2.. It catalyses the reaction a 1,2-diacyl-sn-glycero-3-phosphocholine(out) + ATP + H2O = a 1,2-diacyl-sn-glycero-3-phosphocholine(in) + ADP + phosphate + H(+). In terms of biological role, catalytic component of P4-ATPase flippase complex, which catalyzes the hydrolysis of ATP coupled to the transport of phosphatidylcholine (PC) from the outer to the inner leaflet of the plasma membrane. May contribute to the maintenance of membrane lipid asymmetry. This chain is Phospholipid-transporting ATPase ID, found in Mus musculus (Mouse).